The primary structure comprises 193 residues: A-type ATP synthase subunit E (193 aa).

It belongs to the V-ATPase E subunit family. In terms of assembly, has multiple subunits with at least A(3), B(3), C, D, E, F, H, I and proteolipid K(x).

The protein resides in the cell membrane. Component of the A-type ATP synthase that produces ATP from ADP in the presence of a proton gradient across the membrane. This chain is A-type ATP synthase subunit E, found in Haloquadratum walsbyi (strain DSM 16790 / HBSQ001).